The chain runs to 518 residues: Anthranilate synthase component 1 (518 aa).

Residues Ser38 and Pro283 to Met285 each bind L-tryptophan. Residue Gly324 to Thr325 coordinates chorismate. Glu357 serves as a coordination point for Mg(2+). Chorismate-binding positions include Tyr445, Arg465, Gly479–Gly481, and Gly481. A Mg(2+)-binding site is contributed by Glu494.

The protein belongs to the anthranilate synthase component I family. As to quaternary structure, heterotetramer consisting of two non-identical subunits: a beta subunit (TrpG) and a large alpha subunit (TrpE). It depends on Mg(2+) as a cofactor.

The catalysed reaction is chorismate + L-glutamine = anthranilate + pyruvate + L-glutamate + H(+). Its pathway is amino-acid biosynthesis; L-tryptophan biosynthesis; L-tryptophan from chorismate: step 1/5. With respect to regulation, feedback inhibited by tryptophan. Functionally, part of a heterotetrameric complex that catalyzes the two-step biosynthesis of anthranilate, an intermediate in the biosynthesis of L-tryptophan. In the first step, the glutamine-binding beta subunit (TrpG) of anthranilate synthase (AS) provides the glutamine amidotransferase activity which generates ammonia as a substrate that, along with chorismate, is used in the second step, catalyzed by the large alpha subunit of AS (TrpE) to produce anthranilate. In the absence of TrpG, TrpE can synthesize anthranilate directly from chorismate and high concentrations of ammonia. This Corynebacterium glutamicum (strain ATCC 13032 / DSM 20300 / JCM 1318 / BCRC 11384 / CCUG 27702 / LMG 3730 / NBRC 12168 / NCIMB 10025 / NRRL B-2784 / 534) protein is Anthranilate synthase component 1 (trpE).